Reading from the N-terminus, the 458-residue chain is MLKEYKSVQEVVGPLMIVEGVEGIKYEELVEIQTQTGEKRRGRVLEIDGDRAMIQLFEGSAGINLKDTTVRFLGKPLELGVSEDMIGRIFDGLGNPIDKGPKIIPEKRVDINGSPINPVSRDYPSEFIQTGISTIDGLNTLVRGQKLPIFSGSGLPHNNVAAQIARQAKVLGDDAKFAVVFAAMGITFEEAQFFIDDFTKTGAIDRAVLFINLANDPAIERISTPRMALTCAEYLAFEKGMHVLVILTDLTNYAEALREVSAARKEVPGRRGYPGYLYTDLSQIYERAGKIKGKPGSITQIPILTMPEDDITHPIPDLTGYITEGQIILSRELYKSGIQPPIFVIPSLSRLKDKGIGRGKTREDHADTMNQIYAGYASGREARELAVILGDTALSDADKAFAKFAENFDKEYVNQGYETNRSILETLDLGWKLLKVIPHAELKRIRTEYIDKYLADKD.

This sequence belongs to the ATPase alpha/beta chains family.

Produces ATP from ADP in the presence of a proton gradient across the membrane. The V-type beta chain is a regulatory subunit. This is V-type ATP synthase beta chain from Fusobacterium nucleatum subsp. nucleatum (strain ATCC 25586 / DSM 15643 / BCRC 10681 / CIP 101130 / JCM 8532 / KCTC 2640 / LMG 13131 / VPI 4355).